The sequence spans 2554 residues: MDSVSRGAVASTTGGAVEEPEYLARYLVVKHSWRGRYKRILCISSGGIVTLDPNTLAVTNSYDTGSNFDGASPLVGRDENTESVGGEFTVNVRTDGKGKFKAMKFSSRCRASILTELYRLRWNQIRPVAEFQVLHLRRRNAEWVPYKLKITFVGLELVDSKSGNSRWILDFRDMGSPAIILLSDAYRTKSADSAGFVLCPMYGRKSKAFRAAPGTTNSSIVASLAKTAKSMVGVFLSVDDSQLLTVSEYMTRRAKEAVGAEETPNGWWSVTRLRSAAHGTLNMPGLSLAIGPKGGLGEHGDAVALQLILTKASLVERRIDNYEVVIVRPLSSVSSLVRFAEEPQMFAIEFSDGCPVLVYASISRDNLLAAILDTLQTEGHCPIPVLPRLTMPGHRIDPPCGRVSLISGPQHLVADLETCSLHLKHLAAAAKDAVAEGGSVPGCRARLWRRIREFNACIPYTGVPANSEVPEVTLMALITMLPSTPNLPVDAPPLPPPSPKAAATVIGFVTCLRRLLSSRSAASHIMSFPAAVNRIMGLLRNGSEGVAAEAAGLIASLIGGWSADLSTAPDSRGEKHATIMHTKSVLFAQQGYVTILVNRLKPMSVSPLFSMAIVEVFEAMVCDPHGETTQYTVFVELLRQIAALRRRLFALFAHPAESVRETIAVIMRTIAEEDAIAAESMRDAALRDGALLRHLLNAFSLPASERREVSRQLVALWADSYQPALDLLSRVLPPGLVAYLHTRPDDVVDDTDQEGSSTNRRQKRLLQQRRGRIAKGMGAQDIPLPPGNNVEAGDAAKHMSANASVPDNFQRRAADSSSEASNPQASAFPGVDSTIAGVSQNGYPAFASVTTNANGHEQPETNASDVVGSDPNLYGIQNSVLPAPAQVIVESTAVGSGKLLLNWREFWRAFGLDHNRADLIWNERTRQELIEALKAEVHNLDVEKERTEDISPGDVEATTGQEIIPRISWNYSEFSVSYRSLSKEVCVGQYYLRLLLESGNAGKAQDFPLRDPVAFFRALYHRFQCDADMGLTIDGAVPDELGSSGDWCDMSRLDGFGGGGGASVRELCARAMAIVYEQHYNTIGPFEGTAHITALIDRTNDRALRHRLLLLLKALVKVLLNVEGCVVVGGCVLAVDLLTVVHENSERTPIPLQSNLIAATAFMEPPKEWMYIDKGGAEVGPVEKDVIRSLWSKKDIDWTTKCRALGMSDWKKLRDIRELRWAVAVRVPVLTPSQVGDAALSILHSMVSAHSDLDDAGEIVTPTPRVKRILSSTRCLPHIAQALLSGEPVIVEAGAALLKDVVTRNSKAMIRLYSTGAFYFALAYPGSNLYSIAQLFSVTHVHQAFHGGEEATVSSSLPLAKRSVLGGLLPESLLYVLERSGPAAFAAGMVSDSDTPEIIWTHKMRAENLICQVLQHLGDYPQKLSQHCHSLYDYAPMPPVTYPELRDEMWCHRYYLRNLCDEIQFPNWPIVEHVEFLQSLLVMWREELTRKPMDLSEGEACKILEISLNNVSSDDLNRTASVELNEEISNISKQIQNLDEEKLKRQYRKLAMRYHPDKNPEGREKFLAVQKAYECLQATMQGLQGPQPWRLLLLLKAQCILYRRYGHVLRPFKYAGYPMLLDAVTVDKDDNNFLSNDRSPLLVAASELVSLTCAASSLNGEELVRDGGVQLLSTLLSRCMCVVQPTTSQHEPAAIIVTNVMRTLSVISQFESARAGFLELPSLIEDIVHCTELERVPAAVDAALQSIAKVSVFPELQHGLLKAGALWYILPLLLQYDSTAEESNSVESHGVGVSIQIAKNEHALQASQALSRLTGLCADESLTPYNATAADVLKALLTPKLASLLKDEVAKDLLSKLNTNLETPEIIWNSATRSELLNFVDEQRACQCPDGSYDLKNAQSFSYDALSKEVFVGNVYLKVYNDQPDSEISEPESFCNALIDFISSLVHTELPSVSEDQNLIEDRNSSNDTPELQSSVAEPSLIEEHSDHQPSSEGMKNEECFLIDHLQLGLTALQNLLTKYPDLASVFSSKERLLPLFECFSVAIASKTDIPKLCLNVLSRLTAYAPCLETMVSDGSSLLLLLQMLHSAPSFREGALHVLYALASTPELAWAAAKHGGVVYILELLLPLQKEIPLQQRAAAASLLGKLVAQPMHGPRVAITLVRFLPDGLVSIIRDGPGEAVVHALERTTETPELVWTPAMAASLSAQIATMASDIYREQQKGSVIEWDVPEQSAGQQEMRDEPQVGGIYVRRFLKDPKFPLRNPKRFLEGLLDQYLSAMAATHYEQHPVDPELPLLLSAALVSLLRVHPALADHIGHLGYVPKLVAAVAYEGRRETMSSGEVKAEEIGSDGVNESTDPSSLPGQTPQERVRLSCLRVLHQLAASTTCAEAMAATSAGNAQVVPLLMKAIGWLGGSILALETLKRVVVAGNRARDALVAQGLKVGLIEVLLGLLDWRTGGRYGLSSHMKWNESEASIGRVLAVEVLHGFATEGAHCSKVREILDASEVWSAYKDQKHDLFLPSNTQSAAGVAGFIENSSNSLTYALTAPPPPSHP.

2 disordered regions span residues 746-766 (DVVDDTDQEGSSTNRRQKRLL) and 810-833 (QRRAADSSSEASNPQASAFPGVDS). The span at 815–825 (DSSSEASNPQA) shows a compositional bias: polar residues. 2 coiled-coil regions span residues 925–951 (TRQELIEALKAEVHNLDVEKERTEDIS) and 1518–1546 (RTASVELNEEISNISKQIQNLDEEKLKRQ). One can recognise a J domain in the interval 1524–1606 (LNEEISNISK…AQCILYRRYG (83 aa)). 2 disordered regions span residues 1960-1994 (IEDRNSSNDTPELQSSVAEPSLIEEHSDHQPSSEG) and 2339-2366 (SGEVKAEEIGSDGVNESTDPSSLPGQTP). Residues 1966-1977 (SNDTPELQSSVA) are compositionally biased toward polar residues. The segment covering 1982–1994 (IEEHSDHQPSSEG) has biased composition (basic and acidic residues). A compositionally biased stretch (polar residues) spans 2352-2366 (VNESTDPSSLPGQTP).

Constitutively expressed in roots, hypocotyls, leaves (e.g. vascular tissues), stems, flowers (e.g. petals and stigmas), siliques and pollen.

The protein resides in the endosome membrane. Functionally, required for endosome formation, vacuolar protein sorting and determination of the embryo growth axis. Necessary for the transport of proteins into protein storage vacuoles (PSVs). Participates in vesicle trafficking from the endosome to the central vacuole. Involved in the regulation of shoot phototropism and gravitropism, probably through the positioning of specialized amyloplasts (statoliths) in endodermal cells. The chain is DnaJ homolog subfamily C GRV2 (GRV2) from Arabidopsis thaliana (Mouse-ear cress).